The following is a 105-amino-acid chain: Large ribosomal subunit protein uL23 (105 aa).

The protein belongs to the universal ribosomal protein uL23 family. Part of the 50S ribosomal subunit. Contacts protein L29, and trigger factor when it is bound to the ribosome.

One of the early assembly proteins it binds 23S rRNA. One of the proteins that surrounds the polypeptide exit tunnel on the outside of the ribosome. Forms the main docking site for trigger factor binding to the ribosome. The polypeptide is Large ribosomal subunit protein uL23 (Ureaplasma urealyticum serovar 10 (strain ATCC 33699 / Western)).